Here is a 510-residue protein sequence, read N- to C-terminus: ATP synthase subunit alpha (510 aa).

169 to 176 (GDRQTGKT) contacts ATP.

The protein belongs to the ATPase alpha/beta chains family. F-type ATPases have 2 components, CF(1) - the catalytic core - and CF(0) - the membrane proton channel. CF(1) has five subunits: alpha(3), beta(3), gamma(1), delta(1), epsilon(1). CF(0) has three main subunits: a(1), b(2) and c(9-12). The alpha and beta chains form an alternating ring which encloses part of the gamma chain. CF(1) is attached to CF(0) by a central stalk formed by the gamma and epsilon chains, while a peripheral stalk is formed by the delta and b chains.

The protein resides in the cell inner membrane. The catalysed reaction is ATP + H2O + 4 H(+)(in) = ADP + phosphate + 5 H(+)(out). Its function is as follows. Produces ATP from ADP in the presence of a proton gradient across the membrane. The alpha chain is a regulatory subunit. This is ATP synthase subunit alpha from Rickettsia massiliae (strain Mtu5).